Consider the following 405-residue polypeptide: Arginine biosynthesis bifunctional protein ArgJ (405 aa).

Residues T152, K178, T189, E276, N400, and T405 each contribute to the substrate site. T189 functions as the Nucleophile in the catalytic mechanism.

Belongs to the ArgJ family. Heterotetramer of two alpha and two beta chains.

It is found in the cytoplasm. It carries out the reaction N(2)-acetyl-L-ornithine + L-glutamate = N-acetyl-L-glutamate + L-ornithine. It catalyses the reaction L-glutamate + acetyl-CoA = N-acetyl-L-glutamate + CoA + H(+). Its pathway is amino-acid biosynthesis; L-arginine biosynthesis; L-ornithine and N-acetyl-L-glutamate from L-glutamate and N(2)-acetyl-L-ornithine (cyclic): step 1/1. It functions in the pathway amino-acid biosynthesis; L-arginine biosynthesis; N(2)-acetyl-L-ornithine from L-glutamate: step 1/4. Functionally, catalyzes two activities which are involved in the cyclic version of arginine biosynthesis: the synthesis of N-acetylglutamate from glutamate and acetyl-CoA as the acetyl donor, and of ornithine by transacetylation between N(2)-acetylornithine and glutamate. The sequence is that of Arginine biosynthesis bifunctional protein ArgJ from Pseudomonas syringae pv. syringae (strain B728a).